The primary structure comprises 413 residues: Probable protein phosphatase 2C 78 (413 aa).

A disordered region spans residues lysine 21 to arginine 40. A PPM-type phosphatase domain is found at lysine 111 to leucine 409. Aspartate 153, glycine 154, aspartate 327, and aspartate 400 together coordinate Mn(2+).

This sequence belongs to the PP2C family. The cofactor is Mg(2+). Mn(2+) is required as a cofactor.

Its subcellular location is the golgi apparatus. It localises to the nucleus. The catalysed reaction is O-phospho-L-seryl-[protein] + H2O = L-seryl-[protein] + phosphate. The enzyme catalyses O-phospho-L-threonyl-[protein] + H2O = L-threonyl-[protein] + phosphate. Acts as a negative regulator of abscisic acid (ABA) signaling for stomatal closure in leaves, and controls water loss during leaf senescence. Activated by the NAC029/NAP transcription factor during ABA signaling in senescing leaves. Functions as a negative regulator of osmotic stress and ABA signaling. Acts as a negative regulator of response to drought. This is Probable protein phosphatase 2C 78 from Arabidopsis thaliana (Mouse-ear cress).